We begin with the raw amino-acid sequence, 464 residues long: 17,18-epoxy-17-hydroxycur-19-ene N-malonyltransferase (464 aa).

Residues histidine 191 and aspartate 403 each act as proton acceptor in the active site.

It belongs to the plant acyltransferase family. Monomer. As to expression, mainly expressed in roots.

It is found in the cytoplasm. The enzyme catalyses 17,18-epoxy-17-hydroxycur-19-ene + malonyl-CoA = prestrychnine + CoA. It participates in alkaloid biosynthesis. Its function is as follows. Malonylransferase involved in the biosynthesis of curare monoterpene indole alkaloids (MIAs), natural products such as strychnine, a neurotoxic compound used as a pesticide to control rodents, and its pharmacologically active derivatives, including brucine, used to regulate blood pressure. Curare alkaloids act as animal glycine receptor antagonists. Catalyzes the conversion of 17,18-epoxy-17-hydroxycur-19-ene (Wieland-Gumlich aldehyde) to prestrychnine, which is spontaneously converted into strychnine and isostrychnine. This Strychnos nux-vomica (Poison nut) protein is 17,18-epoxy-17-hydroxycur-19-ene N-malonyltransferase.